The following is a 647-amino-acid chain: Pre-mRNA-splicing factor SLU7 (647 aa).

The segment covering 1 to 19 (MASYKQNLPPSALIKQQVN) has biased composition (polar residues). The disordered stretch occupies residues 1–44 (MASYKQNLPPSALIKQQVNVADKKSKAEVQRDRQLEEDRKAGTA). Positions 21–41 (ADKKSKAEVQRDRQLEEDRKA) are enriched in basic and acidic residues. The CCHC-type zinc finger occupies 113–130 (GACENCGAMGHQKRDCFD). Disordered regions lie at residues 193 to 212 (HEMK…APKD) and 465 to 620 (EVKE…KEME). A compositionally biased stretch (basic and acidic residues) spans 465–479 (EVKEEKEKEDSIKDE). Over residues 480–491 (VAEENSDNDNDE) the composition is skewed to acidic residues. Residues 513–533 (EKEREKERLIEKERRERDQRR) show a composition bias toward basic and acidic residues. A compositionally biased stretch (basic residues) spans 534 to 555 (RDKKREKRERKKAKLGKRKRRH). The span at 588–606 (EKAEGMKAAREGDRGRKYN) shows a compositional bias: basic and acidic residues.

Belongs to the SLU7 family.

The protein localises to the nucleus. Participates in the second catalytic step of pre-mRNA splicing, when the free hydroxyl group of exon I attacks the 3'-splice site to generate spliced mRNA and the excised lariat intron. The polypeptide is Pre-mRNA-splicing factor SLU7 (Caenorhabditis elegans).